A 188-amino-acid chain; its full sequence is Putative ankyrin repeat protein FPV230 (188 aa).

ANK repeat units lie at residues 2–31, 36–65, 135–164, and 168–187; these read ENELKLYYAVSSQNENLVIQLLNKGYNPNA, KYMIPLHKAVECRNVDITKHLLSNGADANV, LGSTPLHIASKYNNKTMVKFFLERGADINI, and NNNTPLIYAVCSVIRLYLKC.

This is Putative ankyrin repeat protein FPV230 from Vertebrata (FPV).